A 474-amino-acid polypeptide reads, in one-letter code: tRNA modification GTPase MnmE (474 aa).

3 residues coordinate (6S)-5-formyl-5,6,7,8-tetrahydrofolate: Arg23, Glu86, and Lys125. In terms of domain architecture, TrmE-type G spans 221–396; sequence GIPVAIVGEP…LKEKLLEYVN (176 aa). Asn231 is a K(+) binding site. Residues 231 to 236, 250 to 256, and 275 to 278 each bind GTP; these read NVGKST, SEIAGTT, and DTAG. Ser235 is a binding site for Mg(2+). K(+) is bound by residues Ser250, Ile252, and Thr255. A Mg(2+)-binding site is contributed by Thr256. Lys474 provides a ligand contact to (6S)-5-formyl-5,6,7,8-tetrahydrofolate.

Belongs to the TRAFAC class TrmE-Era-EngA-EngB-Septin-like GTPase superfamily. TrmE GTPase family. As to quaternary structure, homodimer. Heterotetramer of two MnmE and two MnmG subunits. K(+) is required as a cofactor.

It is found in the cytoplasm. In terms of biological role, exhibits a very high intrinsic GTPase hydrolysis rate. Involved in the addition of a carboxymethylaminomethyl (cmnm) group at the wobble position (U34) of certain tRNAs, forming tRNA-cmnm(5)s(2)U34. In Christiangramia forsetii (strain DSM 17595 / CGMCC 1.15422 / KT0803) (Gramella forsetii), this protein is tRNA modification GTPase MnmE.